The following is a 999-amino-acid chain: Hypoxia up-regulated protein 1 (999 aa).

A signal peptide spans 1-32 (MAATVRRQRPRRLLCWALVAVLLADLLALSDT). N-linked (GlcNAc...) asparagine glycans are attached at residues Asn155, Asn222, and Asn515. Residues 564 to 694 (VEDSPEEEST…KKQKPARKQK (131 aa)) are disordered. A Phosphoserine modification is found at Ser567. Residues 574–583 (LTKLGNTISS) are compositionally biased toward polar residues. The N-linked (GlcNAc...) asparagine glycan is linked to Asn596. Basic and acidic residues-rich tracts occupy residues 611-626 (GSKD…KEEA) and 641-668 (PKGD…KPNE). Residues Asn830, Asn862, and Asn869 are each glycosylated (N-linked (GlcNAc...) asparagine). Lys883 carries the post-translational modification N6-acetyllysine. A disordered region spans residues 909–999 (AKFTKPRPRP…QKRPLKNDEL (91 aa)). N-linked (GlcNAc...) asparagine glycans are attached at residues Asn922 and Asn931. A compositionally biased stretch (basic and acidic residues) spans 949–962 (EEAKAILEPDKEGL). The Prevents secretion from ER motif lies at 996-999 (NDEL).

The protein belongs to the heat shock protein 70 family. Part of a large chaperone multiprotein complex comprising DNAJB11, HSP90B1, HSPA5, HYOU, PDIA2, PDIA4, PDIA6, PPIB, SDF2L1, UGGT1 and very small amounts of ERP29, but not, or at very low levels, CALR nor CANX. As to expression, selectively expressed by cultured astrocytes but not endothelial cells, microglia or neurons.

Its subcellular location is the endoplasmic reticulum lumen. In terms of biological role, has a pivotal role in cytoprotective cellular mechanisms triggered by oxygen deprivation. Promotes HSPA5/BiP-mediated ATP nucleotide exchange and thereby activates the unfolded protein response (UPR) pathway in the presence of endoplasmic reticulum stress. May play a role as a molecular chaperone and participate in protein folding. The chain is Hypoxia up-regulated protein 1 (Hyou1) from Rattus norvegicus (Rat).